The chain runs to 264 residues: Type 1 encapsulin shell protein (264 aa).

The protein belongs to the encapsulin family. Family 1 subfamily. In terms of assembly, forms hollow shells composed of 60 subunits. Monomers probably form pentamers which assemble into the shell. There are 12 pores where the pentamers meet as well as 3-fold axis channels and dimer channels; none are larger than 3-4 Angstroms in diameter. The N-terminus of the protein is inside the shell, the C-terminus is outside.

The protein localises to the encapsulin nanocompartment. Shell component of a type 1 encapsulin nanocompartment. Assembles into proteinaceous shells 21-24 nm in diameter. Empty organelles can be expressed in E.coli. Cargo proteins (DypB) are targeted to the interior via their C-terminal extensions. The chain is Type 1 encapsulin shell protein from Rhodococcus erythropolis (strain PR4 / NBRC 100887).